Here is a 513-residue protein sequence, read N- to C-terminus: ATP synthase subunit alpha (513 aa).

169-176 (GDRQTGKT) serves as a coordination point for ATP.

It belongs to the ATPase alpha/beta chains family. F-type ATPases have 2 components, CF(1) - the catalytic core - and CF(0) - the membrane proton channel. CF(1) has five subunits: alpha(3), beta(3), gamma(1), delta(1), epsilon(1). CF(0) has three main subunits: a(1), b(2) and c(9-12). The alpha and beta chains form an alternating ring which encloses part of the gamma chain. CF(1) is attached to CF(0) by a central stalk formed by the gamma and epsilon chains, while a peripheral stalk is formed by the delta and b chains.

The protein resides in the cell inner membrane. It catalyses the reaction ATP + H2O + 4 H(+)(in) = ADP + phosphate + 5 H(+)(out). Its function is as follows. Produces ATP from ADP in the presence of a proton gradient across the membrane. The alpha chain is a regulatory subunit. The chain is ATP synthase subunit alpha from Enterobacter sp. (strain 638).